Reading from the N-terminus, the 321-residue chain is Malate dehydrogenase (321 aa).

NAD(+)-binding positions include 11 to 16 and aspartate 35; that span reads GSGNIG. Arginine 84 and arginine 90 together coordinate substrate. Residues asparagine 97 and 120 to 122 contribute to the NAD(+) site; that span reads ITN. Substrate contacts are provided by asparagine 122 and arginine 153. Histidine 177 (proton acceptor) is an active-site residue.

This sequence belongs to the LDH/MDH superfamily. MDH type 3 family.

The enzyme catalyses (S)-malate + NAD(+) = oxaloacetate + NADH + H(+). Catalyzes the reversible oxidation of malate to oxaloacetate. The protein is Malate dehydrogenase of Rickettsia peacockii (strain Rustic).